The sequence spans 489 residues: Inositol-pentakisphosphate 2-kinase (489 aa).

An EXKPK motif motif is present at residues 136-140; sequence EIKPK.

The protein belongs to the IPK1 type 2 family. As to expression, in brain, it is expressed throughout the hippocampus (CA1, CA2, CA3 and dentate gyrus), inner layers of the cerebral cortex, and Purkinje cells of the cerebellum. In heart, it is expressed in cardiomyocytes but not in interstitial cells, blood vessels, or valves. Also expressed in testis.

The protein localises to the cytoplasm. It is found in the nucleus. It catalyses the reaction 1D-myo-inositol 1,3,4,5,6-pentakisphosphate + ATP = 1D-myo-inositol hexakisphosphate + ADP + H(+). In terms of biological role, phosphorylates Ins(1,3,4,5,6)P5 at position 2 to form Ins(1,2,3,4,5,6)P6 (InsP6 or phytate). InsP6 is involved in many processes such as mRNA export, non-homologous end-joining, endocytosis, ion channel regulation. It also protects cells from TNF-alpha-induced apoptosis. This is Inositol-pentakisphosphate 2-kinase (Ippk) from Mus musculus (Mouse).